Here is a 442-residue protein sequence, read N- to C-terminus: Septin-8 (442 aa).

An N-acetylalanine modification is found at A2. Residue S10 is modified to Phosphoserine. One can recognise a Septin-type G domain in the interval 41-307 (QGFSFNILCV…ELYRRCKLEE (267 aa)). The segment at 51 to 58 (GETGIGKS) is G1 motif. GTP-binding positions include 51–58 (GETGIGKS), G106, 187–195 (KADTISKSE), G241, and R256. The interval 103 to 106 (DAVG) is G3 motif. The segment at 186 to 189 (AKAD) is G4 motif. Residues 322–410 (LQETYEAKRK…RKAAVEALQS (89 aa)) adopt a coiled-coil conformation. Over residues 377-391 (HQEEKRKVEEKRREL) the composition is skewed to basic and acidic residues. The interval 377–442 (HQEEKRKVEE…WSSIYSVTIP (66 aa)) is disordered. Polar residues-rich tracts occupy residues 408–420 (LQSQ…SQQP) and 432–442 (GWSSIYSVTIP).

The protein belongs to the TRAFAC class TrmE-Era-EngA-EngB-Septin-like GTPase superfamily. Septin GTPase family. As to quaternary structure, septins polymerize into heterooligomeric protein complexes that form filaments, and can associate with cellular membranes, actin filaments and microtubules. GTPase activity is required for filament formation. Interacts with CDK14, SEPTIN4, SEPTIN5 and SEPTIN7. Interacts with VAMP2; the interaction inhibits interaction of VAMP2 with SYP. Interacts with STX1A.

It localises to the cytoplasm. The protein resides in the cytoskeleton. The protein localises to the synapse. It is found in the cell projection. Its subcellular location is the axon. It localises to the cytoplasmic vesicle. The protein resides in the secretory vesicle. The protein localises to the synaptic vesicle membrane. It is found in the presynapse. Its function is as follows. Filament-forming cytoskeletal GTPase. May play a role in platelet secretion. Seems to participate in the process of SNARE complex formation in synaptic vesicles. This is Septin-8 from Callithrix jacchus (White-tufted-ear marmoset).